Consider the following 250-residue polypeptide: Probable transcriptional regulatory protein SYNPCC7002_A1640 (250 aa).

Belongs to the TACO1 family.

The protein resides in the cytoplasm. The chain is Probable transcriptional regulatory protein SYNPCC7002_A1640 from Picosynechococcus sp. (strain ATCC 27264 / PCC 7002 / PR-6) (Agmenellum quadruplicatum).